We begin with the raw amino-acid sequence, 155 residues long: SsrA-binding protein (155 aa).

This sequence belongs to the SmpB family.

Its subcellular location is the cytoplasm. Its function is as follows. Required for rescue of stalled ribosomes mediated by trans-translation. Binds to transfer-messenger RNA (tmRNA), required for stable association of tmRNA with ribosomes. tmRNA and SmpB together mimic tRNA shape, replacing the anticodon stem-loop with SmpB. tmRNA is encoded by the ssrA gene; the 2 termini fold to resemble tRNA(Ala) and it encodes a 'tag peptide', a short internal open reading frame. During trans-translation Ala-aminoacylated tmRNA acts like a tRNA, entering the A-site of stalled ribosomes, displacing the stalled mRNA. The ribosome then switches to translate the ORF on the tmRNA; the nascent peptide is terminated with the 'tag peptide' encoded by the tmRNA and targeted for degradation. The ribosome is freed to recommence translation, which seems to be the essential function of trans-translation. This chain is SsrA-binding protein, found in Lawsonia intracellularis (strain PHE/MN1-00).